The chain runs to 885 residues: Alpha-actinin (885 aa).

Residues 1-242 (MTQDGYMQQE…IMTYVSWYYH (242 aa)) are actin-binding. 2 consecutive Calponin-homology (CH) domains span residues 26-130 (KQQR…LRFA) and 139-245 (MTAK…HAFH). 4 Spectrin repeats span residues 270-377 (LMEE…EEWL), 389-494 (HLAQ…ALDE), 508-614 (EFAK…HTLQ), and 626-727 (LRRQ…NEVE). EF-hand domains are found at residues 741-776 (EQLNEFRTSFNHFDKKRTGRLAPEEFKSCLVSLGYN) and 780-815 (DDRPEFRRILAIVDPNKTGYVHFDAFLDFMTREYTD). Residues D754, T758, R760, E765, D793, N795, T797, and Y799 each coordinate Ca(2+).

It belongs to the alpha-actinin family. Homodimer; antiparallel.

Its function is as follows. F-actin cross-linking protein which is thought to anchor actin to a variety of intracellular structures. This is a bundling protein. The protein is Alpha-actinin of Dermatophagoides farinae (American house dust mite).